A 1436-amino-acid polypeptide reads, in one-letter code: Pleiotropic drug resistance protein 1 (1436 aa).

The ABC transporter 1 domain occupies 165 to 438 (LDSIHILPSK…FESMGFKCPE (274 aa)). ATP is bound at residue 198–205 (GPPGSGKT). The region spanning 516–729 (QLLKVCTERE…SVNAILVNEF (214 aa)) is the ABC transmembrane type-2 1 domain. 7 helical membrane-spanning segments follow: residues 534 to 554 (FVYL…MTIF), 567 to 587 (GGIY…NGLS), 622 to 642 (IPVT…VMGF), 653 to 673 (FLLL…IAAV), 679 to 699 (VAST…GFIL), 707 to 727 (WWIW…ILVN), and 764 to 784 (IGVG…SVAL). The interval 796–826 (TISDESENNESESSPQITSTQEGDSASENKK) is disordered. The segment covering 810–821 (PQITSTQEGDSA) has biased composition (polar residues). The region spanning 838-1090 (ITFDEVVYSV…HLIKYFESIP (253 aa)) is the ABC transporter 2 domain. 883 to 890 (GVSGAGKT) provides a ligand contact to ATP. The ABC transmembrane type-2 2 domain occupies 1163 to 1377 (TQCMACLWKQ…TLYGLVASQF (215 aa)). The next 7 membrane-spanning stretches (helical) occupy residues 1184-1204 (AVRL…FWDI), 1214-1234 (LVNA…QNSS), 1270-1290 (IPYI…MIGF), 1301-1321 (FFFM…TVAV), 1327-1347 (VASI…GFIV), 1358-1378 (WYYW…SQFG), and 1408-1428 (VVAA…ALGI).

This sequence belongs to the ABC transporter superfamily. ABCG family. PDR (TC 3.A.1.205) subfamily. Roots, petals and leaf epidermis, where it is confined to glandular trichomes (at protein level).

It is found in the cell membrane. Functionally, excretes secondary metabolites such as terpenes. Involved in both constitutive and jasmonic acid-dependent induced defense. Confers some resistance to sclareol and B.cinerea. This Nicotiana plumbaginifolia (Leadwort-leaved tobacco) protein is Pleiotropic drug resistance protein 1 (PDR1).